The chain runs to 654 residues: Transcription factor E2-alpha (654 aa).

The short motif at 19–27 is the 9aaTAD element; the sequence is LLDFSMMFP. The interval 31–103 is disordered; that stretch reads TNGKGRPASL…LGPGLGGKSG (73 aa). Low complexity predominate over residues 55–68; it reads SSGSWGSGDQSSSS. A compositionally biased stretch (polar residues) spans 69–79; that stretch reads FDPSRTFSEGT. Residues 84 to 94 are compositionally biased toward low complexity; it reads SHSSLSSSTFL. Phosphoserine occurs at positions 134 and 139. Disordered stretches follow at residues 135–205, 239–268, 292–329, and 343–385; these read PGPL…SAKT, MLGG…FGGL, SFSS…GSSG, and DHSS…YDGG. Positions 147-156 are enriched in low complexity; sequence SQYYPSYSGS. The short motif at 170–176 is the Nuclear localization signal element; that stretch reads PKKVRKV. The segment covering 256–268 has biased composition (low complexity); sequence VGSSGSSSTFGGL. Residues 343 to 354 show a composition bias toward low complexity; it reads DHSSNNFSSSPS. A Phosphothreonine modification is found at threonine 355. Residue serine 359 is modified to Phosphoserine. Residue arginine 371 is modified to Omega-N-methylarginine. Serine 379 is subject to Phosphoserine. The leucine-zipper stretch occupies residues 389 to 425; sequence LQSKIEDHLDEAIHVLRSHAVGTAGDMHTLLPGHGAL. The disordered stretch occupies residues 461–552; the sequence is NHAALPSQPG…KAEREKERRV (92 aa). A Glycyl lysine isopeptide (Lys-Gly) (interchain with G-Cter in SUMO2) cross-link involves residue lysine 498. The span at 512 to 523 shows a compositional bias: basic and acidic residues; the sequence is DHSEEEKKELKA. Serine 529 carries the phosphoserine modification. Aspartate 531 is modified (phosphothreonine). The span at 542 to 552 shows a compositional bias: basic and acidic residues; sequence QKAEREKERRV. Positions 549–602 constitute a bHLH domain; it reads ERRVANNARERLRVRDINEAFKELGRMCQLHLNSEKPQTKLLILHQAVSVILNL. Lysine 625 is covalently cross-linked (Glycyl lysine isopeptide (Lys-Gly) (interchain with G-Cter in SUMO2)). The interval 633–654 is disordered; the sequence is PQMVLSAPHPGLSEAHNPAGHM.

Homodimer. Heterodimer; efficient DNA binding requires dimerization with another bHLH protein. Forms a heterodimer with ASH1, TWIST1 and TWIST2. Forms a heterodimer with MYOG; heterodimerization enhances MYOG DNA-binding and transcriptional activities. Forms a heterodimer with NEUROD1; the heterodimer is inhibited in presence of ID2, but not NR0B2, to E-box element. Forms a heterodimer with TCF15; the heterodimer binds E-box element. Forms a heterodimer with ATOH8; repress transcription of TCF3 and TCF3/NEUROG3 dimer-induced transactivation of E box-dependent promoters. Component of a nuclear TAL-1 complex composed at least of CBFA2T3, LDB1, TAL1 and TCF3. Interacts with NEUROD2, PTF1A and TGFB1I1. Interacts with EP300 and UBE2I. Interacts with BHLHA9. Interacts with ASB2; the interaction is mediated by SKP2 and targets TCF3 for Notch-induced proteasomal degradation. As to quaternary structure, forms a heterodimer with ATOH7; required for ATOH7 DNA-binding. In terms of assembly, interacts with RALGAPA1 and FIGLA. Post-translationally, phosphorylated following NGF stimulation. In terms of processing, undergoes Notch-induced ubiquitination and subsequent proteasomal degradation which is mediated by ASB1 or ASB2, the substrate-recognition components of probable ECS E3 ubiquitin-protein ligase complexes.

The protein localises to the nucleus. In terms of biological role, transcriptional regulator involved in the initiation of neuronal differentiation and mesenchymal to epithelial transition. Heterodimers between TCF3 and tissue-specific basic helix-loop-helix (bHLH) proteins play major roles in determining tissue-specific cell fate during embryogenesis, like muscle or early B-cell differentiation. Together with TCF15, required for the mesenchymal to epithelial transition. Dimers bind DNA on E-box motifs: 5'-CANNTG-3'. Binds to the kappa-E2 site in the kappa immunoglobulin gene enhancer. Binds to IEB1 and IEB2, which are short DNA sequences in the insulin gene transcription control region. Functionally, facilitates ATOH7 binding to DNA at the consensus sequence 5'-CAGGTG-3', and positively regulates transcriptional activity. The polypeptide is Transcription factor E2-alpha (TCF3) (Homo sapiens (Human)).